A 1281-amino-acid polypeptide reads, in one-letter code: Angiotensin-converting enzyme (1281 aa).

A signal peptide spans 1–17 (MPAALGLLLPWLSLVGA). The Extracellular portion of the chain corresponds to 18 to 1241 (LQPGLEPPQS…MSVGTKQATA (1224 aa)). Peptidase M2 domains are found at residues 28–610 (DPTE…LGWP) and 629–1208 (IVDE…LGWP). Residues asparagine 42, asparagine 62, asparagine 80, asparagine 99, and asparagine 148 are each glycosylated (N-linked (GlcNAc...) asparagine). An intrachain disulfide couples cysteine 145 to cysteine 151. Tyrosine 217 is a chloride binding site. Residue asparagine 304 is glycosylated (N-linked (GlcNAc...) asparagine). Cysteine 345 and cysteine 363 are joined by a disulfide. Position 376 (histidine 376) interacts with Zn(2+). The Proton acceptor 1 role is filled by glutamate 377. Residues histidine 380 and glutamate 404 each contribute to the Zn(2+) site. N-linked (GlcNAc...) asparagine glycosylation occurs at asparagine 495. The Proton donor 1 role is filled by histidine 506. Arginine 515 is a chloride binding site. A disulfide bridge connects residues cysteine 531 and cysteine 543. 6 N-linked (GlcNAc...) asparagine glycosylation sites follow: asparagine 535, asparagine 573, asparagine 601, asparagine 643, asparagine 663, and asparagine 746. Cysteine 743 and cysteine 749 are disulfide-bonded. The chloride site is built by arginine 777 and tyrosine 815. Cysteine 943 and cysteine 961 are joined by a disulfide. Residue histidine 974 coordinates Zn(2+). Glutamate 975 functions as the Proton acceptor 2 in the catalytic mechanism. The Zn(2+) site is built by histidine 978 and glutamate 1002. Chloride contacts are provided by tryptophan 1076 and arginine 1080. The active-site Proton donor 2 is histidine 1104. Arginine 1113 provides a ligand contact to chloride. Cysteine 1129 and cysteine 1141 form a disulfide bridge. Asparagine 1177 is a glycosylation site (N-linked (GlcNAc...) asparagine). Residues 1201–1240 (NGEVLGWPEYSWTPYAVTEFHAATDTADFLGMSVGTKQAT) are juxtamembrane stalk. Residues 1242-1262 (GAWVLLALALVFLITSIFLGV) traverse the membrane as a helical segment. The Cytoplasmic portion of the chain corresponds to 1263–1281 (KLFSSRRKAFKSSSEMELK).

Belongs to the peptidase M2 family. Requires Zn(2+) as cofactor. Chloride serves as cofactor.

The protein resides in the cell membrane. The protein localises to the cytoplasm. It carries out the reaction Release of a C-terminal dipeptide, oligopeptide-|-Xaa-Yaa, when Xaa is not Pro, and Yaa is neither Asp nor Glu. Thus, conversion of angiotensin I to angiotensin II, with increase in vasoconstrictor activity, but no action on angiotensin II.. The catalysed reaction is angiotensin I + H2O = L-histidyl-L-leucine + angiotensin II. The enzyme catalyses bradykinin + H2O = L-Phe-L-Arg + bradykinin(1-7). It catalyses the reaction substance P + H2O = substance P(1-9) + L-Leu-L-Met-NH2. It carries out the reaction substance P + H2O = substance P(1-8) + Gly-L-Leu-L-Met-NH2. The catalysed reaction is substance P + H2O = L-Phe-L-Phe-Gly-L-Leu-L-Met-NH2 + substance P(1-6). The enzyme catalyses neurotensin + H2O = neurotensin(1-11) + L-isoleucyl-L-leucine. It catalyses the reaction goralatide + H2O = N-acetyl-L-seryl-L-aspartate + L-lysyl-L-proline. It carries out the reaction Met-enkephalin + H2O = L-phenylalanyl-L-methionine + L-tyrosylglycylglycine. The catalysed reaction is Leu-enkephalin + H2O = L-tyrosylglycylglycine + L-phenylalanyl-L-leucine. The enzyme catalyses Met-enkephalin-Arg-Phe + H2O = L-arginyl-L-phenylalanine + Met-enkephalin. Dipeptidyl carboxypeptidase that removes dipeptides from the C-terminus of a variety of circulating hormones, such as angiotensin I, bradykinin or enkephalins, thereby playing a key role in the regulation of blood pressure, electrolyte homeostasis or synaptic plasticity. Composed of two similar catalytic domains, each possessing a functional active site, with different selectivity for substrates. Plays a major role in the angiotensin-renin system that regulates blood pressure and sodium retention by the kidney by converting angiotensin I to angiotensin II, resulting in an increase of the vasoconstrictor activity of angiotensin. Also able to inactivate bradykinin, a potent vasodilator, and therefore enhance the blood pressure response. Acts as a regulator of synaptic transmission by mediating cleavage of neuropeptide hormones, such as substance P, neurotensin or enkephalins. Catalyzes degradation of different enkephalin neuropeptides (Met-enkephalin, Leu-enkephalin, Met-enkephalin-Arg-Phe and possibly Met-enkephalin-Arg-Gly-Leu). Also acts as a regulator of hematopoietic stem cell differentiation by mediating degradation of hemoregulatory peptide N-acetyl-SDKP (AcSDKP). The protein is Angiotensin-converting enzyme of Gallus gallus (Chicken).